A 118-amino-acid polypeptide reads, in one-letter code: uncharacterized protein (118 aa).

The tract at residues 1–49 (MDYVGGSLKLKNVKKKPLKKKKKDSKKLAEKVQEHSSRDKSPLEENGVS) is disordered. Residues 11–25 (KNVKKKPLKKKKKDS) show a composition bias toward basic residues. A compositionally biased stretch (basic and acidic residues) spans 26–43 (KKLAEKVQEHSSRDKSPL).

This is an uncharacterized protein from Schizosaccharomyces pombe (strain 972 / ATCC 24843) (Fission yeast).